We begin with the raw amino-acid sequence, 786 residues long: Protein RDM16 (786 aa).

Composition is skewed to basic and acidic residues over residues 1–80, 87–112, and 123–143; these read MDKE…SRDR, RSHEGSKEKESRSKRKDREEENGARD, and NGERRSRFEDVAIEVENKDAQ. Disordered stretches follow at residues 1-223, 255-283, 532-557, and 616-642; these read MDKE…SANL, KKATKPTSEGSPHTRVPPSTTTPAVSTGT, RPIEPPAEAAPPPPQPLKLTKKEQKK, and EREQAHTDRNAARKLTPAEKREKKERK. Residues 145–164 are compositionally biased toward polar residues; it reads SEGSGATNPTSGVTMGASTY. Residues 165 to 176 are compositionally biased toward low complexity; the sequence is SSIPSEASAAPS. The span at 177–189 shows a compositional bias: polar residues; the sequence is QTLLTKVSSISTT. Residues 190 to 203 show a composition bias toward basic and acidic residues; the sequence is DENKASVVRSHEVP. Positions 268-283 are enriched in low complexity; it reads TRVPPSTTTPAVSTGT. Pro residues predominate over residues 534-547; it reads IEPPAEAAPPPPQP.

It is found in the nucleus. Its subcellular location is the nucleoplasm. Functionally, functions in the RNA-directed DNA methylation (RdDM) pathway. Acts as a pre-mRNA splicing factor, likely by affecting Pol V transcripts. Affects DNA methylation of transposable elements (TEs) and preferentially influences NRPD1- and ROS1-targeted loci. In Arabidopsis thaliana (Mouse-ear cress), this protein is Protein RDM16.